The sequence spans 90 residues: Small ribosomal subunit protein bS16 (90 aa).

Belongs to the bacterial ribosomal protein bS16 family.

This chain is Small ribosomal subunit protein bS16, found in Streptococcus sanguinis (strain SK36).